A 412-amino-acid chain; its full sequence is 2-methylacyl-CoA dehydrogenase, mitochondrial (412 aa).

A mitochondrion-targeting transit peptide spans 1–25; the sequence is MHKLFAVRSLSSAIVKSFKSLQNQQ. FAD contacts are provided by residues 154–163 and 187–189; these read LAMSEPNAGS and WCT. Serine 163 lines the substrate pocket. Substrate is bound by residues 209–210, tyrosine 264, and 271–274; these read SK and DLER. The active-site Proton acceptor is the glutamate 273. Residues arginine 299, glutamine 310, and 367–371 each bind FAD; that span reads QCLGG. Residue 394–395 participates in substrate binding; sequence AG. 396–398 lines the FAD pocket; sequence TSE.

This sequence belongs to the acyl-CoA dehydrogenase family. As to quaternary structure, homotetramer. FAD is required as a cofactor. As to expression, expressed in flowers.

Its subcellular location is the mitochondrion. It carries out the reaction 2-methylbutanoyl-CoA + oxidized [electron-transfer flavoprotein] + H(+) = (2E)-2-methylbut-2-enoyl-CoA + reduced [electron-transfer flavoprotein]. Functionally, short/branched-chain acyl-CoA dehydrogenase (SBCAD). Uses 2-methylbutanoyl-CoA as substrate. Minor activity with the straight-chain substrates, butanoyl-CoA, valeryl-CoA, hexanoyl-CoA, and octanoyl-CoA but no activity with isovaleryl-CoA. The polypeptide is 2-methylacyl-CoA dehydrogenase, mitochondrial (2MBCD) (Solanum tuberosum (Potato)).